A 219-amino-acid polypeptide reads, in one-letter code: Deoxyribose-phosphate aldolase (219 aa).

Aspartate 89 functions as the Proton donor/acceptor in the catalytic mechanism. Lysine 151 functions as the Schiff-base intermediate with acetaldehyde in the catalytic mechanism. Lysine 180 serves as the catalytic Proton donor/acceptor.

It belongs to the DeoC/FbaB aldolase family. DeoC type 1 subfamily.

It localises to the cytoplasm. It catalyses the reaction 2-deoxy-D-ribose 5-phosphate = D-glyceraldehyde 3-phosphate + acetaldehyde. Its pathway is carbohydrate degradation; 2-deoxy-D-ribose 1-phosphate degradation; D-glyceraldehyde 3-phosphate and acetaldehyde from 2-deoxy-alpha-D-ribose 1-phosphate: step 2/2. Functionally, catalyzes a reversible aldol reaction between acetaldehyde and D-glyceraldehyde 3-phosphate to generate 2-deoxy-D-ribose 5-phosphate. This chain is Deoxyribose-phosphate aldolase, found in Clostridioides difficile (strain 630) (Peptoclostridium difficile).